The primary structure comprises 1051 residues: Carbamoyl phosphate synthase large chain (1051 aa).

The segment at M1–D399 is carboxyphosphate synthetic domain. Residues R127, R167, G173, G174, K206, L208, E213, G239, V240, H241, Q282, and E296 each coordinate ATP. Residues R131 to L325 enclose the ATP-grasp 1 domain. Mg(2+)-binding residues include Q282, E296, and N298. The Mn(2+) site is built by Q282, E296, and N298. The oligomerization domain stretch occupies residues I400–L548. The interval E549 to N930 is carbamoyl phosphate synthetic domain. One can recognise an ATP-grasp 2 domain in the interval S673–F863. Residues R709, K748, I750, E755, G779, V780, H781, S782, Q822, and E834 each coordinate ATP. Mg(2+) is bound by residues Q822, E834, and N836. Mn(2+) is bound by residues Q822, E834, and N836. The MGS-like domain occupies N930–I1051. An allosteric domain region spans residues R931–I1051.

It belongs to the CarB family. Composed of two chains; the small (or glutamine) chain promotes the hydrolysis of glutamine to ammonia, which is used by the large (or ammonia) chain to synthesize carbamoyl phosphate. Tetramer of heterodimers (alpha,beta)4. It depends on Mg(2+) as a cofactor. The cofactor is Mn(2+).

The enzyme catalyses hydrogencarbonate + L-glutamine + 2 ATP + H2O = carbamoyl phosphate + L-glutamate + 2 ADP + phosphate + 2 H(+). It catalyses the reaction hydrogencarbonate + NH4(+) + 2 ATP = carbamoyl phosphate + 2 ADP + phosphate + 2 H(+). Its pathway is amino-acid biosynthesis; L-arginine biosynthesis; carbamoyl phosphate from bicarbonate: step 1/1. It participates in pyrimidine metabolism; UMP biosynthesis via de novo pathway; (S)-dihydroorotate from bicarbonate: step 1/3. Its function is as follows. Large subunit of the glutamine-dependent carbamoyl phosphate synthetase (CPSase). CPSase catalyzes the formation of carbamoyl phosphate from the ammonia moiety of glutamine, carbonate, and phosphate donated by ATP, constituting the first step of 2 biosynthetic pathways, one leading to arginine and/or urea and the other to pyrimidine nucleotides. The large subunit (synthetase) binds the substrates ammonia (free or transferred from glutamine from the small subunit), hydrogencarbonate and ATP and carries out an ATP-coupled ligase reaction, activating hydrogencarbonate by forming carboxy phosphate which reacts with ammonia to form carbamoyl phosphate. This is Carbamoyl phosphate synthase large chain from Saccharolobus islandicus (strain L.S.2.15 / Lassen #1) (Sulfolobus islandicus).